Consider the following 137-residue polypeptide: Large ribosomal subunit protein uL16 (137 aa).

The protein belongs to the universal ribosomal protein uL16 family. As to quaternary structure, part of the 50S ribosomal subunit.

Binds 23S rRNA and is also seen to make contacts with the A and possibly P site tRNAs. In Magnetococcus marinus (strain ATCC BAA-1437 / JCM 17883 / MC-1), this protein is Large ribosomal subunit protein uL16.